The primary structure comprises 236 residues: Thiamine-phosphate synthase (236 aa).

4-amino-2-methyl-5-(diphosphooxymethyl)pyrimidine contacts are provided by residues 57–61 (QLRDK) and Asn89. Mg(2+) contacts are provided by Asp90 and Asp109. Ser128 contacts 4-amino-2-methyl-5-(diphosphooxymethyl)pyrimidine. Residue 154 to 156 (TPS) participates in 2-[(2R,5Z)-2-carboxy-4-methylthiazol-5(2H)-ylidene]ethyl phosphate binding. Residue Lys157 coordinates 4-amino-2-methyl-5-(diphosphooxymethyl)pyrimidine. Residues Gly185 and 205–206 (IS) contribute to the 2-[(2R,5Z)-2-carboxy-4-methylthiazol-5(2H)-ylidene]ethyl phosphate site.

It belongs to the thiamine-phosphate synthase family. Mg(2+) serves as cofactor.

It catalyses the reaction 2-[(2R,5Z)-2-carboxy-4-methylthiazol-5(2H)-ylidene]ethyl phosphate + 4-amino-2-methyl-5-(diphosphooxymethyl)pyrimidine + 2 H(+) = thiamine phosphate + CO2 + diphosphate. It carries out the reaction 2-(2-carboxy-4-methylthiazol-5-yl)ethyl phosphate + 4-amino-2-methyl-5-(diphosphooxymethyl)pyrimidine + 2 H(+) = thiamine phosphate + CO2 + diphosphate. The catalysed reaction is 4-methyl-5-(2-phosphooxyethyl)-thiazole + 4-amino-2-methyl-5-(diphosphooxymethyl)pyrimidine + H(+) = thiamine phosphate + diphosphate. It functions in the pathway cofactor biosynthesis; thiamine diphosphate biosynthesis; thiamine phosphate from 4-amino-2-methyl-5-diphosphomethylpyrimidine and 4-methyl-5-(2-phosphoethyl)-thiazole: step 1/1. In terms of biological role, condenses 4-methyl-5-(beta-hydroxyethyl)thiazole monophosphate (THZ-P) and 2-methyl-4-amino-5-hydroxymethyl pyrimidine pyrophosphate (HMP-PP) to form thiamine monophosphate (TMP). In Roseiflexus sp. (strain RS-1), this protein is Thiamine-phosphate synthase.